Consider the following 299-residue polypeptide: GTPase Era (299 aa).

Residues 2–170 (KTGFVALAGK…LDLIIENLPE (169 aa)) form the Era-type G domain. The segment at 10 to 17 (GKPNVGKS) is G1. Residue 10-17 (GKPNVGKS) coordinates GTP. The tract at residues 36 to 40 (QTTRN) is G2. A G3 region spans residues 57-60 (DTPG). Residues 57–61 (DTPGI) and 119–122 (NKID) each bind GTP. The tract at residues 119–122 (NKID) is G4. The interval 149 to 151 (TSA) is G5. One can recognise a KH type-2 domain in the interval 201 to 278 (TYEEIPHSVA…FLDLHVKVKR (78 aa)).

Belongs to the TRAFAC class TrmE-Era-EngA-EngB-Septin-like GTPase superfamily. Era GTPase family. Monomer.

The protein localises to the cytoplasm. It localises to the cell inner membrane. In terms of biological role, an essential GTPase that binds both GDP and GTP, with rapid nucleotide exchange. Plays a role in 16S rRNA processing and 30S ribosomal subunit biogenesis and possibly also in cell cycle regulation and energy metabolism. This is GTPase Era from Thermosipho melanesiensis (strain DSM 12029 / CIP 104789 / BI429).